The primary structure comprises 195 residues: dITP/XTP pyrophosphatase (195 aa).

9–14 (TGNKGK) contacts substrate. Glutamate 41 and aspartate 70 together coordinate Mg(2+). The Proton acceptor role is filled by aspartate 70. Residues serine 71, 155 to 158 (FGYD), lysine 178, and 183 to 184 (HR) contribute to the substrate site.

Belongs to the HAM1 NTPase family. In terms of assembly, homodimer. Mg(2+) serves as cofactor.

It carries out the reaction XTP + H2O = XMP + diphosphate + H(+). The enzyme catalyses dITP + H2O = dIMP + diphosphate + H(+). The catalysed reaction is ITP + H2O = IMP + diphosphate + H(+). Functionally, pyrophosphatase that catalyzes the hydrolysis of nucleoside triphosphates to their monophosphate derivatives, with a high preference for the non-canonical purine nucleotides XTP (xanthosine triphosphate), dITP (deoxyinosine triphosphate) and ITP. Seems to function as a house-cleaning enzyme that removes non-canonical purine nucleotides from the nucleotide pool, thus preventing their incorporation into DNA/RNA and avoiding chromosomal lesions. The chain is dITP/XTP pyrophosphatase from Haemophilus influenzae (strain ATCC 51907 / DSM 11121 / KW20 / Rd).